The sequence spans 332 residues: Large ribosomal subunit protein uL10 (332 aa).

The segment at 294–332 (QAAAAPVAVEDNTEEPEEEEEEEEDAAESAAAGLGALFG) is disordered. Positions 304-320 (DNTEEPEEEEEEEEDAA) are enriched in acidic residues.

The protein belongs to the universal ribosomal protein uL10 family. As to quaternary structure, part of the 50S ribosomal subunit. Forms part of the ribosomal stalk which helps the ribosome interact with GTP-bound translation factors. Forms a heptameric L10(L12)2(L12)2(L12)2 complex, where L10 forms an elongated spine to which the L12 dimers bind in a sequential fashion.

Functionally, forms part of the ribosomal stalk, playing a central role in the interaction of the ribosome with GTP-bound translation factors. The polypeptide is Large ribosomal subunit protein uL10 (Methanosphaera stadtmanae (strain ATCC 43021 / DSM 3091 / JCM 11832 / MCB-3)).